We begin with the raw amino-acid sequence, 151 residues long: Large ribosomal subunit protein bL9 (151 aa).

It belongs to the bacterial ribosomal protein bL9 family.

Its function is as follows. Binds to the 23S rRNA. The protein is Large ribosomal subunit protein bL9 of Rhodococcus jostii (strain RHA1).